We begin with the raw amino-acid sequence, 316 residues long: SHC-transforming protein homolog 1 (316 aa).

One can recognise a PID domain in the interval 16–158 (GVSLSATYLG…LIDVLTTAIN (143 aa)). The region spanning 211–307 (WYHGNLSRED…ETSLNLIRPV (97 aa)) is the SH2 domain. The tract at residues 292-316 (SEGRDRETSLNLIRPVPCPGSDDIE) is disordered.

In terms of assembly, interacts (via PID domain) with daf-2 (via cytoplasmic domain). Interacts with mek-1; the interaction is independent of mek-1 catalytic activity and is constitutive. Interacts (via N-terminus) with mlk-1 (via NPQY motif when phosphorylated on tyrosine residue). Does not interact with jkk-1 or sek-1. Interacts (via SH2 domain) with svh-2. Interacts with svh-4. In terms of tissue distribution, expressed in hypodermis, intestine, head and tail neurons, pharynx, gonads, vulva and body muscles.

It is found in the cytoplasm. Its subcellular location is the nucleus. It localises to the cell membrane. Its function is as follows. Scaffold protein which plays an important role in the activation of the JNK pathway composed of mlk-1, mek-1 and kgb-1; by bringing together mek-1 and mlk-1, promotes mlk-1-mediated phosphorylation and activation of mek-1 which in turn phosphorylates kgb-1. In addition, negatively modulates the activation of the insulin/IGF-1-like signaling (IIS) probably by inhibiting the insulin receptor daf-2. Positively regulates the activity of the transcription factor daf-16/FOXO by both inhibiting IIS and activating the JNK pathway. Plays a role in maintaining gonadal basement membrane integrity through activation of the JNK pathway components mek-1 and jnk-1. Involved in the response to several environmental stresses including heavy metal ions (Cu(2+) and Cd(2+)), heat, oxidative and protein misfolding (ER) stresses. Plays a role in gonad and germline development following the L1 diapause. Plays a role in life span and egg laying. Plays a role in axon regeneration after injury. This is SHC-transforming protein homolog 1 from Caenorhabditis elegans.